Here is a 200-residue protein sequence, read N- to C-terminus: Pyridoxal 5'-phosphate synthase subunit PdxT (200 aa).

Gly52–Ser54 provides a ligand contact to L-glutamine. The active-site Nucleophile is Cys84. Residues Arg116 and Ile145–Arg146 each bind L-glutamine. Catalysis depends on charge relay system residues His181 and Glu183.

The protein belongs to the glutaminase PdxT/SNO family. In the presence of PdxS, forms a dodecamer of heterodimers. Only shows activity in the heterodimer.

The enzyme catalyses aldehydo-D-ribose 5-phosphate + D-glyceraldehyde 3-phosphate + L-glutamine = pyridoxal 5'-phosphate + L-glutamate + phosphate + 3 H2O + H(+). It catalyses the reaction L-glutamine + H2O = L-glutamate + NH4(+). It participates in cofactor biosynthesis; pyridoxal 5'-phosphate biosynthesis. Its function is as follows. Catalyzes the hydrolysis of glutamine to glutamate and ammonia as part of the biosynthesis of pyridoxal 5'-phosphate. The resulting ammonia molecule is channeled to the active site of PdxS. The chain is Pyridoxal 5'-phosphate synthase subunit PdxT from Saccharolobus islandicus (strain M.16.27) (Sulfolobus islandicus).